We begin with the raw amino-acid sequence, 276 residues long: Probable transposase for insertion sequence element IS702 (276 aa).

Residues 118–256 (MDVTESPIER…SNQYRNRHRR (139 aa)) form the DDE Tnp4 domain. 4 residues coordinate a divalent metal cation: D119, D170, D190, and E234.

This sequence belongs to the transposase 11 family. Requires a divalent metal cation as cofactor.

Its function is as follows. Involved in the transposition of the insertion sequence. The chain is Probable transposase for insertion sequence element IS702 from Microchaete diplosiphon (Fremyella diplosiphon).